The chain runs to 283 residues: MKHYLELCQRIVDEGVWVENARTGKRCLTVIDADLTYDVANNQFPLITTRKSYWKAAIAEFLGYIRGYDNAADFRKLGTKTWDANANENSAWLNNPHRKGTDDMGRVYGVQGRAWRKPNGETVDQLRKIVNNLRNGIDDRGEIMTFFNPGEFELGCLRPCMHTHTFSLLGDTLYLTSYQRSCDVPLGLNFNQIQVFTFLALMAQITGKKAGKAYHKIINAHIYEDQLDLMKNVQLKRDPFPLPQLHINPEIKTLEDLETWVTMDDFKVTGYQCHDAIKYPFSV.

Arginine 22 lines the dUMP pocket. Cysteine 160 functions as the Nucleophile in the catalytic mechanism. DUMP is bound by residues 180–183, asparagine 191, and 221–223; these read RSCD and HIY. Aspartate 183 contacts (6R)-5,10-methylene-5,6,7,8-tetrahydrofolate. Serine 282 contacts (6R)-5,10-methylene-5,6,7,8-tetrahydrofolate.

The protein belongs to the thymidylate synthase family. Bacterial-type ThyA subfamily. In terms of assembly, homodimer.

It is found in the cytoplasm. It catalyses the reaction dUMP + (6R)-5,10-methylene-5,6,7,8-tetrahydrofolate = 7,8-dihydrofolate + dTMP. Its pathway is pyrimidine metabolism; dTTP biosynthesis. In terms of biological role, catalyzes the reductive methylation of 2'-deoxyuridine-5'-monophosphate (dUMP) to 2'-deoxythymidine-5'-monophosphate (dTMP) while utilizing 5,10-methylenetetrahydrofolate (mTHF) as the methyl donor and reductant in the reaction, yielding dihydrofolate (DHF) as a by-product. This enzymatic reaction provides an intracellular de novo source of dTMP, an essential precursor for DNA biosynthesis. In Pasteurella multocida (strain Pm70), this protein is Thymidylate synthase.